An 89-amino-acid chain; its full sequence is MSIKLINIGFGNIVSANRLVAIVSPESAPIKRIIQEARDRGMLIDATYGRRTRAVIITDSDHVILSAVQPETVAHRLSTKEEVVVEDDE.

Belongs to the RemA family.

The chain is Putative regulatory protein CPE1749 from Clostridium perfringens (strain 13 / Type A).